A 380-amino-acid polypeptide reads, in one-letter code: MVSSVLRDARRIVVKVGSSLVTNEGRGLDEVAIGEWCRQLAALVRGQGGEPREVIMVSSGAIAEGMKRLGWSSRPGEIHELQAAAAVGQMGLAQMYETKLREQSMGSAQVLLTHADLADRERYLNARSTLLTLLRLGVVPVINENDTVVTDEIKFGDNDTLGALVANLVEADALVILTDQKGLYTADPRRDPQAQFVHEAQAGDAALEAMAGGAGSSIGKGGMITKILAAKRAAGSGASTVIAWGREPDVLLRLARGESIGTLLVAQTQKNQARKQWMVDHLQLRGSVTVDAGAAAKLREDGKSLLPIGMVAVEGDFVRGDVIAVRDAGGTEIARGLANYASAEARLLCRKPSAEFERLLGYAAEPEMVHRDNMVVLGAR.

K15 serves as a coordination point for ATP. The substrate site is built by S59, D146, and N158. 178-179 (TD) is a binding site for ATP. The PUA domain maps to 285–363 (RGSVTVDAGA…AEFERLLGYA (79 aa)).

This sequence belongs to the glutamate 5-kinase family.

The protein localises to the cytoplasm. It carries out the reaction L-glutamate + ATP = L-glutamyl 5-phosphate + ADP. The protein operates within amino-acid biosynthesis; L-proline biosynthesis; L-glutamate 5-semialdehyde from L-glutamate: step 1/2. Catalyzes the transfer of a phosphate group to glutamate to form L-glutamate 5-phosphate. This chain is Glutamate 5-kinase, found in Acidovorax ebreus (strain TPSY) (Diaphorobacter sp. (strain TPSY)).